A 161-amino-acid polypeptide reads, in one-letter code: Efficient mitochondria targeting-associated protein 19 (161 aa).

Topologically, residues 1 to 10 are cytoplasmic; the sequence is MKLGHREQQF. The EXPERA domain occupies 7–159; that stretch reads EQQFYLWYFI…PTFLIPLRLC (153 aa). Residues 11-31 form a helical membrane-spanning segment; the sequence is YLWYFIVHIPITIFIDSSVVI. The Lumenal segment spans residues 32–61; sequence PAKWQLGIAQKVVSDHIAKQHDFLLSEKPE. Residues 62–82 traverse the membrane as a helical segment; the sequence is WLYWFVVLELVLQLPLFVYFV. Residues 83-101 are Cytoplasmic-facing; sequence NKFWNSSELQVNTNSRLKK. A helical transmembrane segment spans residues 102-122; the sequence is WLRIYGWNASLTTLICIVVIF. The Lumenal portion of the chain corresponds to 123 to 141; that stretch reads KRGYIPYDVLKTSLSMTQK. A helical transmembrane segment spans residues 142–160; sequence CQLASVYLPTFLIPLRLCF. V161 is a topological domain (cytoplasmic).

Belongs to the TMEM97/sigma-2 receptor family.

Its subcellular location is the endoplasmic reticulum membrane. Functionally, part of an import route for newly synthesized mitochondrial proteins termed the ER-SURF pathway (ER surface-mediated protein targeting), which retrieves mitochondrial precursor proteins from the ER surface and reroutes them to mitochondria for efficient mitochondrial import. Acts as a quality control factor in the ER, promoting the proteolytic degradation of nonproductive and extramitochondrial precursor proteins in the ER membrane thus removing them from the ER surface. This Saccharomyces cerevisiae (strain ATCC 204508 / S288c) (Baker's yeast) protein is Efficient mitochondria targeting-associated protein 19.